A 370-amino-acid chain; its full sequence is tRNA-specific 2-thiouridylase MnmA (370 aa).

Residues 11-18 and Met-37 contribute to the ATP site; that span reads GMSGGVDS. Residues 97–99 are interaction with target base in tRNA; it reads NPD. The Nucleophile role is filled by Cys-102. Cys-102 and Cys-199 form a disulfide bridge. Gly-126 is a binding site for ATP. An interaction with tRNA region spans residues 149–151; the sequence is KDQ. Cys-199 functions as the Cysteine persulfide intermediate in the catalytic mechanism. Residues 307–308 form an interaction with tRNA region; it reads RY.

Belongs to the MnmA/TRMU family.

The protein localises to the cytoplasm. It catalyses the reaction S-sulfanyl-L-cysteinyl-[protein] + uridine(34) in tRNA + AH2 + ATP = 2-thiouridine(34) in tRNA + L-cysteinyl-[protein] + A + AMP + diphosphate + H(+). In terms of biological role, catalyzes the 2-thiolation of uridine at the wobble position (U34) of tRNA, leading to the formation of s(2)U34. The chain is tRNA-specific 2-thiouridylase MnmA from Staphylococcus carnosus (strain TM300).